We begin with the raw amino-acid sequence, 347 residues long: D-alanine--D-alanine ligase (347 aa).

Residues 134–332 (KLYAKDLGVK…LAQSLPKTPK (199 aa)) form the ATP-grasp domain. 161–216 (LIGFNFPFIIKPSNAGSSLGVSVVKEEKELIYALDGAFEYSKEILIEPFIQGVKEY) is a binding site for ATP. Mg(2+) is bound by residues aspartate 288, glutamate 300, and asparagine 302.

It belongs to the D-alanine--D-alanine ligase family. Requires Mg(2+) as cofactor. It depends on Mn(2+) as a cofactor.

The protein resides in the cytoplasm. The catalysed reaction is 2 D-alanine + ATP = D-alanyl-D-alanine + ADP + phosphate + H(+). It participates in cell wall biogenesis; peptidoglycan biosynthesis. Functionally, cell wall formation. The polypeptide is D-alanine--D-alanine ligase (Helicobacter pylori (strain Shi470)).